The following is a 98-amino-acid chain: uncharacterized protein (98 aa).

This is an uncharacterized protein from Archaeoglobus fulgidus (strain ATCC 49558 / DSM 4304 / JCM 9628 / NBRC 100126 / VC-16).